Consider the following 315-residue polypeptide: Large ribosomal subunit protein uL10 (315 aa).

Residues 285 to 294 show a composition bias toward low complexity; it reads AAAPAASAAP. Residues 285 to 315 are disordered; the sequence is AAAPAASAAPAKEEKEESEESDDDMGFGLFD. Residues 300–309 show a composition bias toward acidic residues; it reads EESEESDDDM.

Belongs to the universal ribosomal protein uL10 family. P0 forms a pentameric complex by interaction with dimers of P1 and P2. In terms of processing, phosphorylated.

In terms of biological role, ribosomal protein P0 is the functional equivalent of E.coli protein L10. This chain is Large ribosomal subunit protein uL10 (RPLP0), found in Lithobates sylvaticus (Wood frog).